Reading from the N-terminus, the 185-residue chain is Threonylcarbamoyl-AMP synthase (185 aa).

Positions 1-185 (MKNFEQVLKA…AKTSQILRQG (185 aa)) constitute a YrdC-like domain. The segment at 163–185 (ETSGRNKPSEIRDAKTSQILRQG) is disordered. The segment covering 164–177 (TSGRNKPSEIRDAK) has biased composition (basic and acidic residues).

Belongs to the SUA5 family. TsaC subfamily.

It is found in the cytoplasm. It catalyses the reaction L-threonine + hydrogencarbonate + ATP = L-threonylcarbamoyladenylate + diphosphate + H2O. Its function is as follows. Required for the formation of a threonylcarbamoyl group on adenosine at position 37 (t(6)A37) in tRNAs that read codons beginning with adenine. Catalyzes the conversion of L-threonine, HCO(3)(-)/CO(2) and ATP to give threonylcarbamoyl-AMP (TC-AMP) as the acyladenylate intermediate, with the release of diphosphate. The protein is Threonylcarbamoyl-AMP synthase of Vibrio campbellii (strain ATCC BAA-1116).